Consider the following 293-residue polypeptide: 4-hydroxy-tetrahydrodipicolinate synthase (293 aa).

Threonine 47 contributes to the pyruvate binding site. Tyrosine 136 functions as the Proton donor/acceptor in the catalytic mechanism. Lysine 164 serves as the catalytic Schiff-base intermediate with substrate. Isoleucine 206 contributes to the pyruvate binding site.

This sequence belongs to the DapA family. As to quaternary structure, homotetramer; dimer of dimers.

The protein localises to the cytoplasm. The enzyme catalyses L-aspartate 4-semialdehyde + pyruvate = (2S,4S)-4-hydroxy-2,3,4,5-tetrahydrodipicolinate + H2O + H(+). It functions in the pathway amino-acid biosynthesis; L-lysine biosynthesis via DAP pathway; (S)-tetrahydrodipicolinate from L-aspartate: step 3/4. Its function is as follows. Catalyzes the condensation of (S)-aspartate-beta-semialdehyde [(S)-ASA] and pyruvate to 4-hydroxy-tetrahydrodipicolinate (HTPA). The sequence is that of 4-hydroxy-tetrahydrodipicolinate synthase from Listeria monocytogenes serotype 4a (strain HCC23).